We begin with the raw amino-acid sequence, 160 residues long: Ribosomal RNA large subunit methyltransferase H (160 aa).

Residues Gly108 and 127-132 (FGLMTW) each bind S-adenosyl-L-methionine.

Belongs to the RNA methyltransferase RlmH family. Homodimer.

It localises to the cytoplasm. It carries out the reaction pseudouridine(1915) in 23S rRNA + S-adenosyl-L-methionine = N(3)-methylpseudouridine(1915) in 23S rRNA + S-adenosyl-L-homocysteine + H(+). Functionally, specifically methylates the pseudouridine at position 1915 (m3Psi1915) in 23S rRNA. The polypeptide is Ribosomal RNA large subunit methyltransferase H (Bartonella bacilliformis (strain ATCC 35685 / KC583 / Herrer 020/F12,63)).